Consider the following 206-residue polypeptide: Large ribosomal subunit protein uL4 (206 aa).

Residues 45-76 form a disordered region; that stretch reads RQGNQSAKTRAEVSGGGKKPWRQKGTGRARQG.

Belongs to the universal ribosomal protein uL4 family. In terms of assembly, part of the 50S ribosomal subunit.

One of the primary rRNA binding proteins, this protein initially binds near the 5'-end of the 23S rRNA. It is important during the early stages of 50S assembly. It makes multiple contacts with different domains of the 23S rRNA in the assembled 50S subunit and ribosome. Its function is as follows. Forms part of the polypeptide exit tunnel. The chain is Large ribosomal subunit protein uL4 from Clostridium novyi (strain NT).